The following is a 134-amino-acid chain: Interleukin-5 (134 aa).

A signal peptide spans 1–21 (MRMLLNLSLLALGAAYVSAFA). N-linked (GlcNAc...) asparagine glycans are attached at residues Asn-76 and Asn-90.

This sequence belongs to the IL-5 family. In terms of assembly, homodimer; disulfide-linked. Interacts with IL5RA. Interacts with CSF2RB.

The protein localises to the secreted. In terms of biological role, homodimeric cytokine expressed predominantly by T-lymphocytes and NK cells that plays an important role in the survival, differentiation, and chemotaxis of eosinophils. Also acts on activated and resting B-cells to induce immunoglobulin production, growth, and differentiation. Mechanistically, exerts its biological effects through a receptor composed of IL5RA subunit and the cytokine receptor common subunit beta/CSF2RB. Binding to the receptor leads to activation of various kinases including LYN, SYK and JAK2 and thereby propagates signals through the RAS-MAPK and JAK-STAT5 pathways respectively. In Canis lupus familiaris (Dog), this protein is Interleukin-5 (IL5).